The following is a 404-amino-acid chain: Zinc finger CCCH domain-containing protein 15 homolog (404 aa).

The segment covering 1–10 has biased composition (pro residues); sequence MPPKKAPPGP. The disordered stretch occupies residues 1–71; sequence MPPKKAPPGP…KRKEEKEKKL (71 aa). Basic and acidic residues predominate over residues 12-28; it reads KKTEQKKKEKVIEDKTF. Positions 38–50 are enriched in low complexity; it reads QQKFIQQVQKQVQ. The segment covering 56 to 71 has biased composition (basic and acidic residues); sequence PRQDGDKRKEEKEKKL. 2 consecutive C3H1-type zinc fingers follow at residues 94–121 and 165–202; these read DPKS…HDLS and PTTD…HALP. Thr-218 carries the phosphothreonine modification. The residue at position 221 (Ser-221) is a Phosphoserine. Residues 246 to 270 adopt a coiled-coil conformation; that stretch reads LAWKKRKIAEKKAKLAAEEERKKSD. 2 stretches are compositionally biased toward low complexity: residues 352 to 361 and 369 to 380; these read EAAKTAAAED and PSSSAPANDAAP. The segment at 352 to 380 is disordered; it reads EAAKTAAAEDAAADEDGPSSSAPANDAAP.

The protein belongs to the ZC3H15/TMA46 family.

In Drosophila melanogaster (Fruit fly), this protein is Zinc finger CCCH domain-containing protein 15 homolog.